The chain runs to 95 residues: Aspartyl/glutamyl-tRNA(Asn/Gln) amidotransferase subunit C (95 aa).

It belongs to the GatC family. In terms of assembly, heterotrimer of A, B and C subunits.

The enzyme catalyses L-glutamyl-tRNA(Gln) + L-glutamine + ATP + H2O = L-glutaminyl-tRNA(Gln) + L-glutamate + ADP + phosphate + H(+). It catalyses the reaction L-aspartyl-tRNA(Asn) + L-glutamine + ATP + H2O = L-asparaginyl-tRNA(Asn) + L-glutamate + ADP + phosphate + 2 H(+). In terms of biological role, allows the formation of correctly charged Asn-tRNA(Asn) or Gln-tRNA(Gln) through the transamidation of misacylated Asp-tRNA(Asn) or Glu-tRNA(Gln) in organisms which lack either or both of asparaginyl-tRNA or glutaminyl-tRNA synthetases. The reaction takes place in the presence of glutamine and ATP through an activated phospho-Asp-tRNA(Asn) or phospho-Glu-tRNA(Gln). The protein is Aspartyl/glutamyl-tRNA(Asn/Gln) amidotransferase subunit C of Xanthobacter autotrophicus (strain ATCC BAA-1158 / Py2).